Here is a 227-residue protein sequence, read N- to C-terminus: Ribosomal RNA large subunit methyltransferase E (227 aa).

Positions 78, 80, 103, 119, and 143 each coordinate S-adenosyl-L-methionine. Lys-183 serves as the catalytic Proton acceptor.

The protein belongs to the class I-like SAM-binding methyltransferase superfamily. RNA methyltransferase RlmE family.

It is found in the cytoplasm. The catalysed reaction is uridine(2552) in 23S rRNA + S-adenosyl-L-methionine = 2'-O-methyluridine(2552) in 23S rRNA + S-adenosyl-L-homocysteine + H(+). Its function is as follows. Specifically methylates the uridine in position 2552 of 23S rRNA at the 2'-O position of the ribose in the fully assembled 50S ribosomal subunit. This Rickettsia peacockii (strain Rustic) protein is Ribosomal RNA large subunit methyltransferase E.